Reading from the N-terminus, the 600-residue chain is UvrABC system protein C (600 aa).

The GIY-YIG domain maps to 15-100 (NSAGVYEYFN…IKQLHPKYNI (86 aa)). A UVR domain is found at 203–238 (SVLLKNLEKQMLVLAQNENYEEAAKIRDQIATIKDL).

Belongs to the UvrC family. As to quaternary structure, interacts with UvrB in an incision complex.

It is found in the cytoplasm. In terms of biological role, the UvrABC repair system catalyzes the recognition and processing of DNA lesions. UvrC both incises the 5' and 3' sides of the lesion. The N-terminal half is responsible for the 3' incision and the C-terminal half is responsible for the 5' incision. In Campylobacter jejuni subsp. doylei (strain ATCC BAA-1458 / RM4099 / 269.97), this protein is UvrABC system protein C.